The following is a 314-amino-acid chain: Solute carrier family 25 member 44 (314 aa).

Solcar repeat units follow at residues 18-100 (KKFY…TRKF), 107-210 (SNTV…YAEQ), and 220-302 (PHIV…LKKL). Transmembrane regions (helical) follow at residues 20 to 42 (FYVFGVAMTMMIRVSVYPFTLIR), 71 to 90 (AGLYRGFLVNTFTLISGQCY), 113 to 133 (LVAGGSASLVAQSITVPIDVV), 185 to 201 (GYVASLLTYIPNSAVWW), 222 to 239 (IVFQAISGPLAAATASIL), and 278 to 296 (LSARIISATPSTIVIVVGY).

It belongs to the mitochondrial carrier (TC 2.A.29) family. In terms of tissue distribution, highly expressed in brown adipose tissues compared with other metabolic organs.

It localises to the mitochondrion membrane. The catalysed reaction is L-valine(in) = L-valine(out). It catalyses the reaction L-leucine(in) = L-leucine(out). Mitochondrial solute transporter which transports branched-chain amino acid (BCAA; valine, leucine and isoleucine) into mitochondria in brown adipose tissue (BAT). BAT is involved in BCAA catabolism and actively utilizes BCAA in the mitochondria for thermogenesis. The protein is Solute carrier family 25 member 44 of Mus musculus (Mouse).